A 126-amino-acid chain; its full sequence is Protein ApaG (126 aa).

Positions 2–126 constitute an ApaG domain; that stretch reads SALDDSIRVE…FRLALPGLLH (125 aa).

This is Protein ApaG from Shewanella sp. (strain ANA-3).